The following is a 299-amino-acid chain: Recombination-associated protein RdgC (299 aa).

This sequence belongs to the RdgC family.

It localises to the cytoplasm. The protein resides in the nucleoid. May be involved in recombination. The chain is Recombination-associated protein RdgC from Neisseria meningitidis serogroup B (strain ATCC BAA-335 / MC58).